We begin with the raw amino-acid sequence, 1061 residues long: Zinc finger protein ZFPM1 (1061 aa).

Residues 152-185 (VVNKDVFPCKDCGIWYRSERNLQAHLMYYCASRQ) form a CCHC FOG-type 1 zinc finger. C160, C163, H176, and C181 together coordinate Zn(2+). 3 C2H2-type zinc fingers span residues 204-228 (RICP…MRSH), 234-256 (FVCL…LKVH), and 262-285 (GVCH…VTNH). 2 disordered regions span residues 349-393 (PSAT…SEET) and 435-455 (TEMS…GAAT). Residues 378-388 (SPISSSSSASS) show a composition bias toward low complexity. The span at 436–448 (EMSSPTPGSSPVP) shows a compositional bias: polar residues. The CCHC FOG-type 2 zinc finger occupies 508 to 541 (SAVPKGATCFECEITFNNINNYYVHKRLYCSGRH). Residues C516, C519, H532, and C537 each coordinate Zn(2+). Disordered regions lie at residues 561-586 (ALAS…ESSA) and 599-630 (MDCE…NRTV). Positions 565-574 (GFSSTEQEAS) are enriched in polar residues. Residues 623-656 (EEDPNRTVCGACNIRFSRHETYVVHKRYYCASRH) form a CCHC FOG-type 3 zinc finger. The Zn(2+) site is built by C631, C634, H647, and C652. The interval 661–681 (RRREVNKPGPPYTTQPTPRTR) is disordered. Residues 736 to 742 (PIDLSKK) are interaction with CTBP. The CCHC FOG-type 4 zinc-finger motif lies at 759–792 (APLADYHECTACRISFNSLESYLAHKKFSCPTAP). Zn(2+) contacts are provided by C767, C770, H783, and C788. The C2H2-type 4 zinc finger occupies 869–892 (TTCPYCPHNVIIRGDLLEHFRSVH). Residues 917-1021 (RGQTSSASEN…MQPPKPSLIS (105 aa)) form a disordered region. Low complexity-rich tracts occupy residues 933-942 (VSSASPLQLP) and 954-972 (TTSS…STPR). Pro residues predominate over residues 973-984 (PLLPTSPAPPSN). Residues 1023-1056 (VPNGNHRYCRLCNIKFSSLSTFIAHKKYYCSSHA) form a CCHC FOG-type 5 zinc finger. C1031, C1034, H1047, and C1052 together coordinate Zn(2+).

It belongs to the FOG (Friend of GATA) family. Interacts with corepressor CTBP. Interacts with the N-terminal zinc-finger of GATA1 and probably GATA2. In terms of tissue distribution, predominantly expressed in heart and brain. Also expressed in ventral blood island and adult spleen.

It is found in the nucleus. Its function is as follows. Transcription regulator that plays an central role in red blood cell differentiation. Essential cofactor that acts via the formation of a heterodimer with transcription factors of the GATA family GATA1 and GATA2. Such heterodimer can both activate or repress transcriptional activity, depending on the cell and promoter context. Acts as a repressor of red blood cells, probably by modulating activity of GATA1. The protein is Zinc finger protein ZFPM1 (zfpm1) of Xenopus laevis (African clawed frog).